The chain runs to 329 residues: Phosphate acyltransferase (329 aa).

It belongs to the PlsX family. Homodimer. Probably interacts with PlsY.

Its subcellular location is the cytoplasm. It catalyses the reaction a fatty acyl-[ACP] + phosphate = an acyl phosphate + holo-[ACP]. The protein operates within lipid metabolism; phospholipid metabolism. In terms of biological role, catalyzes the reversible formation of acyl-phosphate (acyl-PO(4)) from acyl-[acyl-carrier-protein] (acyl-ACP). This enzyme utilizes acyl-ACP as fatty acyl donor, but not acyl-CoA. This Shouchella clausii (strain KSM-K16) (Alkalihalobacillus clausii) protein is Phosphate acyltransferase.